The following is a 100-amino-acid chain: Large ribosomal subunit protein uL23 (100 aa).

This sequence belongs to the universal ribosomal protein uL23 family. Part of the 50S ribosomal subunit. Contacts protein L29, and trigger factor when it is bound to the ribosome.

One of the early assembly proteins it binds 23S rRNA. One of the proteins that surrounds the polypeptide exit tunnel on the outside of the ribosome. Forms the main docking site for trigger factor binding to the ribosome. The sequence is that of Large ribosomal subunit protein uL23 from Buchnera aphidicola subsp. Acyrthosiphon pisum (strain 5A).